The primary structure comprises 648 residues: NADP-dependent malic enzyme, chloroplastic (648 aa).

The transit peptide at 1 to 61 (MISLNSSFLE…VDSAVRDVNA (61 aa)) directs the protein to the chloroplast. Tyr195 acts as the Proton donor in catalysis. Arg248 is an NAD(+) binding site. Lys266 (proton acceptor) is an active-site residue. 3 residues coordinate a divalent metal cation: Glu339, Asp340, and Asp363. Asp363 contacts NAD(+). 392–408 (LFLGAGEAGTGIAELIA) provides a ligand contact to NADP(+). Asn504 contacts NAD(+).

It belongs to the malic enzymes family. As to quaternary structure, homotetramer. The cofactor is Mg(2+). Mn(2+) is required as a cofactor.

The protein localises to the plastid. It is found in the chloroplast. It carries out the reaction (S)-malate + NADP(+) = pyruvate + CO2 + NADPH. The enzyme catalyses oxaloacetate + H(+) = pyruvate + CO2. It functions in the pathway photosynthesis; C4 acid pathway. Its function is as follows. The chloroplastic ME isoform decarboxylates malate shuttled from neighboring mesophyll cells. The CO(2) released is then refixed by ribulose-bisphosphate carboxylase. This pathway eliminates the photorespiratory loss of CO(2) that occurs in most plants. The chain is NADP-dependent malic enzyme, chloroplastic (MOD1) from Flaveria trinervia (Clustered yellowtops).